A 332-amino-acid polypeptide reads, in one-letter code: Ketol-acid reductoisomerase (NADP(+)) (332 aa).

The KARI N-terminal Rossmann domain maps to 1–182 (MATIYYEKDA…GCTRAGVLAT (182 aa)). NADP(+) is bound by residues 25–28 (YGSQ), Arg-48, Ser-53, and 83–86 (DELQ). His-108 is an active-site residue. An NADP(+)-binding site is contributed by Gly-134. A KARI C-terminal knotted domain is found at 183 to 328 (TFKEETETDL…KELRSMMPWL (146 aa)). The Mg(2+) site is built by Asp-191, Glu-195, Glu-227, and Glu-231. Position 252 (Ser-252) interacts with substrate.

This sequence belongs to the ketol-acid reductoisomerase family. Mg(2+) is required as a cofactor.

It catalyses the reaction (2R)-2,3-dihydroxy-3-methylbutanoate + NADP(+) = (2S)-2-acetolactate + NADPH + H(+). The enzyme catalyses (2R,3R)-2,3-dihydroxy-3-methylpentanoate + NADP(+) = (S)-2-ethyl-2-hydroxy-3-oxobutanoate + NADPH + H(+). The protein operates within amino-acid biosynthesis; L-isoleucine biosynthesis; L-isoleucine from 2-oxobutanoate: step 2/4. Its pathway is amino-acid biosynthesis; L-valine biosynthesis; L-valine from pyruvate: step 2/4. Involved in the biosynthesis of branched-chain amino acids (BCAA). Catalyzes an alkyl-migration followed by a ketol-acid reduction of (S)-2-acetolactate (S2AL) to yield (R)-2,3-dihydroxy-isovalerate. In the isomerase reaction, S2AL is rearranged via a Mg-dependent methyl migration to produce 3-hydroxy-3-methyl-2-ketobutyrate (HMKB). In the reductase reaction, this 2-ketoacid undergoes a metal-dependent reduction by NADPH to yield (R)-2,3-dihydroxy-isovalerate. The protein is Ketol-acid reductoisomerase (NADP(+)) of Methanocella arvoryzae (strain DSM 22066 / NBRC 105507 / MRE50).